A 505-amino-acid polypeptide reads, in one-letter code: Retinoic acid receptor gamma (505 aa).

Disordered stretches follow at residues 1–57 (MMKF…SSKD) and 113–134 (SLSV…PSPP). Basic and acidic residues-rich tracts occupy residues 12-22 (DGGERPEEEGK) and 32-46 (MGKE…KEEA). The modulating stretch occupies residues 52-142 (MSSSKDRICS…PPPPPRVYKP (91 aa)). A compositionally biased stretch (polar residues) spans 115–124 (SVETQSTSSE). 2 consecutive NR C4-type zinc fingers follow at residues 143-163 (CFVC…CEGC) and 179-203 (CHRD…LQKC). The segment at residues 143 to 208 (CFVCNDKSSG…RLQKCFEVGM (66 aa)) is a DNA-binding region (nuclear receptor). The hinge stretch occupies residues 209-237 (SKEAVRNDRNKKKKEIKEEVVTDSYEMPP). In terms of domain architecture, NR LBD spans 238–472 (EMEALIQKVS…PLIREMLENP (235 aa)). The interval 462 to 505 (PPLIREMLENPEAFEDDASPPPKSEQKPIKVEEKPGEKTSTKDP) is disordered. Residues 485–505 (SEQKPIKVEEKPGEKTSTKDP) are compositionally biased toward basic and acidic residues.

This sequence belongs to the nuclear hormone receptor family. NR1 subfamily. As to quaternary structure, heterodimer; with a RXR molecule. Binds DNA preferentially as a RAR/RXR heterodimer. Isoform Delta-1A and Isoform Delta-1B are most abundant in regenerating limbs, tails, and the anterior half of the lower jaw. Isoform Delta-2 is broadly and uniformly distributed.

The protein resides in the nucleus. Receptor for retinoic acid. Retinoic acid receptors bind as heterodimers to their target response elements in response to their ligands, all-trans or 9-cis retinoic acid, and regulate gene expression in various biological processes. The RAR/RXR heterodimers bind to the retinoic acid response elements (RARE) composed of tandem 5'-AGGTCA-3' sites known as DR1-DR5. The polypeptide is Retinoic acid receptor gamma (RARG) (Notophthalmus viridescens (Eastern newt)).